A 1086-amino-acid chain; its full sequence is Tyrosine-protein kinase receptor svh-2 (1086 aa).

The N-terminal stretch at 1-34 is a signal peptide; the sequence is MVLGSSQSSAKELTTQSSIFRFLVLLLCFTSATG. The Extracellular segment spans residues 35–651; sequence GQINGKLLNG…DKKGSSPGWK (617 aa). 5 N-linked (GlcNAc...) asparagine glycosylation sites follow: Asn276, Asn299, Asn461, Asn554, and Asn617. The chain crosses the membrane as a helical span at residues 652–672; it reads IAIAIISVMTIILIVAIIVYY. Topologically, residues 673–1086 are cytoplasmic; sequence MRNRFPRIKT…LLSECSETSV (414 aa). Positions 735 to 996 constitute a Protein kinase domain; sequence VDKLDPIGQG…SDLVTIIPNV (262 aa). Residues 741-749 and Lys767 contribute to the ATP site; that span reads IGQGHYGVV. Asp858 (proton acceptor) is an active-site residue. At Tyr890 the chain carries Phosphotyrosine. The interval 1056 to 1086 is disordered; it reads AELPSDSPSTSTAIPQSTPYQLLSECSETSV. Residues 1061–1086 show a composition bias toward polar residues; sequence DSPSTSTAIPQSTPYQLLSECSETSV.

The protein belongs to the protein kinase superfamily. Tyr protein kinase family. Interacts (via cytoplasmic domain) with mlk-1. Interacts with shc-1 (via SH2 domain). May interact (when tyrosine-phosphorylated) with tns-1 (via SH2 domain). In terms of processing, may be autophosphorylated on Tyr-890 following dimerization. Expressed in body wall and vulva muscles, pharynx, intestine, excretory canals, distal tip cells and some neurons. Expressed in D-type motor neurons upon axon injury.

It is found in the cell membrane. It carries out the reaction L-tyrosyl-[protein] + ATP = O-phospho-L-tyrosyl-[protein] + ADP + H(+). In terms of biological role, receptor tyrosine kinase which may phosphorylate mlk-1, a component of the mlk-1, mek-1 and kgb-1 pathway. Involved in axon regeneration after injury by promoting the generation of productive and stable growth cones. In Caenorhabditis elegans, this protein is Tyrosine-protein kinase receptor svh-2.